Reading from the N-terminus, the 339-residue chain is Serpentine receptor class delta-19 (339 aa).

Transmembrane regions (helical) follow at residues 2–22 (IIFF…LNLL), 39–59 (ATLI…DLFI), 90–110 (VGLS…LISF), 130–150 (ITIM…TLFV), 187–207 (VYAV…IFVL), 242–262 (IIPM…SGLL), and 270–290 (SIFS…LYFV).

This sequence belongs to the nematode receptor-like protein srd family.

It localises to the membrane. The polypeptide is Serpentine receptor class delta-19 (srd-19) (Caenorhabditis elegans).